The chain runs to 212 residues: Ribonuclease P protein component 3 (212 aa).

Belongs to the eukaryotic/archaeal RNase P protein component 3 family. Consists of a catalytic RNA component and at least 4-5 protein subunits.

Its subcellular location is the cytoplasm. It catalyses the reaction Endonucleolytic cleavage of RNA, removing 5'-extranucleotides from tRNA precursor.. Functionally, part of ribonuclease P, a protein complex that generates mature tRNA molecules by cleaving their 5'-ends. This chain is Ribonuclease P protein component 3, found in Pyrococcus abyssi (strain GE5 / Orsay).